Reading from the N-terminus, the 98-residue chain is Cell division topological specificity factor (98 aa).

Belongs to the MinE family.

Its function is as follows. Prevents the cell division inhibition by proteins MinC and MinD at internal division sites while permitting inhibition at polar sites. This ensures cell division at the proper site by restricting the formation of a division septum at the midpoint of the long axis of the cell. This Nitrosomonas europaea (strain ATCC 19718 / CIP 103999 / KCTC 2705 / NBRC 14298) protein is Cell division topological specificity factor.